Consider the following 155-residue polypeptide: MKENVFDVLIYLFENYLDRDTEQAPDPDEMRTELLEAGFPQREINRAFDWLETLGAQQPMRAASLPAFRIFSSEELAKLDVECRGFLMFLEQNGILTAASREVVIDRLMALNEEIISLENLKWVVLMVLFSQPSEEVAFARMENLVYESFPGYIH.

It belongs to the Smg family.

The protein is Protein Smg homolog of Methylococcus capsulatus (strain ATCC 33009 / NCIMB 11132 / Bath).